Consider the following 41-residue polypeptide: MKDFTTYLSTAPVVAFAWITITAGLLIEINRFFPDPLVFSF.

The helical transmembrane segment at 7 to 27 (YLSTAPVVAFAWITITAGLLI) threads the bilayer.

The protein belongs to the PsaJ family.

The protein localises to the plastid. Its subcellular location is the chloroplast thylakoid membrane. In terms of biological role, may help in the organization of the PsaE and PsaF subunits. This chain is Photosystem I reaction center subunit IX, found in Oedogonium cardiacum (Filamentous green alga).